The following is a 103-amino-acid chain: Small ribosomal subunit protein uS10 (103 aa).

Belongs to the universal ribosomal protein uS10 family. As to quaternary structure, part of the 30S ribosomal subunit.

Involved in the binding of tRNA to the ribosomes. The protein is Small ribosomal subunit protein uS10 of Persephonella marina (strain DSM 14350 / EX-H1).